Consider the following 468-residue polypeptide: 3-isopropylmalate dehydratase large subunit (468 aa).

3 residues coordinate [4Fe-4S] cluster: cysteine 347, cysteine 407, and cysteine 410. The segment covering 424–441 (SASSSNRNFKGRQGSPSG) has biased composition (polar residues). Residues 424-443 (SASSSNRNFKGRQGSPSGRT) form a disordered region.

Belongs to the aconitase/IPM isomerase family. LeuC type 1 subfamily. In terms of assembly, heterodimer of LeuC and LeuD. It depends on [4Fe-4S] cluster as a cofactor.

It catalyses the reaction (2R,3S)-3-isopropylmalate = (2S)-2-isopropylmalate. It functions in the pathway amino-acid biosynthesis; L-leucine biosynthesis; L-leucine from 3-methyl-2-oxobutanoate: step 2/4. In terms of biological role, catalyzes the isomerization between 2-isopropylmalate and 3-isopropylmalate, via the formation of 2-isopropylmaleate. This is 3-isopropylmalate dehydratase large subunit from Prochlorococcus marinus (strain MIT 9215).